Reading from the N-terminus, the 309-residue chain is tRNA uridine(34) hydroxylase (309 aa).

A Rhodanese domain is found at Ser129–Ser223. Cys183 serves as the catalytic Cysteine persulfide intermediate. Positions Tyr288–Ser309 are disordered.

This sequence belongs to the TrhO family.

It catalyses the reaction uridine(34) in tRNA + AH2 + O2 = 5-hydroxyuridine(34) in tRNA + A + H2O. In terms of biological role, catalyzes oxygen-dependent 5-hydroxyuridine (ho5U) modification at position 34 in tRNAs. The chain is tRNA uridine(34) hydroxylase from Mesorhizobium japonicum (strain LMG 29417 / CECT 9101 / MAFF 303099) (Mesorhizobium loti (strain MAFF 303099)).